An 86-amino-acid chain; its full sequence is Cell division topological specificity factor (86 aa).

This sequence belongs to the MinE family.

Prevents the cell division inhibition by proteins MinC and MinD at internal division sites while permitting inhibition at polar sites. This ensures cell division at the proper site by restricting the formation of a division septum at the midpoint of the long axis of the cell. The chain is Cell division topological specificity factor from Parasynechococcus marenigrum (strain WH8102).